Consider the following 432-residue polypeptide: Mannan endo-1,4-beta-mannosidase 1 (432 aa).

A signal peptide spans 1–28 (MRLLGAHRAALLVLACVVVVVIHGLGEA). The substrate site is built by Trp93 and Asn209. Glu210 serves as the catalytic Proton donor. Tyr289 lines the substrate pocket. The Nucleophile role is filled by Glu329. Trp371 contributes to the substrate binding site.

The protein belongs to the glycosyl hydrolase 5 (cellulase A) family. As to expression, ubiquitous.

Its subcellular location is the secreted. It carries out the reaction Random hydrolysis of (1-&gt;4)-beta-D-mannosidic linkages in mannans, galactomannans and glucomannans.. The polypeptide is Mannan endo-1,4-beta-mannosidase 1 (MAN1) (Oryza sativa subsp. japonica (Rice)).